We begin with the raw amino-acid sequence, 116 residues long: Large ribosomal subunit protein eL30 (116 aa).

This sequence belongs to the eukaryotic ribosomal protein eL30 family. Component of the large ribosomal subunit.

It localises to the cytoplasm. Functionally, component of the large ribosomal subunit. The ribosome is a large ribonucleoprotein complex responsible for the synthesis of proteins in the cell. In Ictalurus punctatus (Channel catfish), this protein is Large ribosomal subunit protein eL30 (rpl30).